The sequence spans 281 residues: Putative zinc-binding protein ORF11 (281 aa).

In Ictaluridae (bullhead catfishes), this protein is Putative zinc-binding protein ORF11 (ORF11).